A 609-amino-acid chain; its full sequence is Wee1-like protein kinase (609 aa).

Residues 1–10 (MAFRQSEHEM) show a composition bias toward basic and acidic residues. 2 disordered regions span residues 1–88 (MAFR…SMSP) and 147–166 (PLHN…PFTP). Phosphoserine is present on residues S23, S25, and S27. The span at 37–48 (RFADDDFDKDTP) shows a compositional bias: basic and acidic residues. T47 bears the Phosphothreonine mark. S52 carries the phosphoserine modification. A compositionally biased stretch (polar residues) spans 153 to 165 (LPTQDTANVNPFT). A Phosphothreonine modification is found at T165. The residue at position 168 (S168) is a Phosphoserine. Residues 239–517 (FMQVNVIGVG…SQSIFSHPIL (279 aa)) form the Protein kinase domain. ATP contacts are provided by residues 245–253 (IGVGEFGVV) and K268. The active-site Proton acceptor is the D361. Residues N366 and D412 each contribute to the Mg(2+) site.

This sequence belongs to the protein kinase superfamily. Ser/Thr protein kinase family. WEE1 subfamily. Mg(2+) is required as a cofactor. Post-translationally, phosphorylated during M and G1 phases. As to expression, expressed in embryos; expression remains high in the proliferating cells of the central nervous system well after cells in the rest of the embryo have ceased dividing.

It is found in the nucleus. The catalysed reaction is L-tyrosyl-[protein] + ATP = O-phospho-L-tyrosyl-[protein] + ADP + H(+). Its activity is regulated as follows. Negatively regulated by phosphorylation in the M-phase. Functionally, acts as a negative regulator of entry into mitosis (G2 to M transition). This kinase specifically phosphorylates and inactivates cyclin B1-complexed CDC2. The protein is Wee1-like protein kinase of Drosophila melanogaster (Fruit fly).